The sequence spans 377 residues: Probable sensor histidine kinase HK (377 aa).

2 disordered regions span residues 1–169 and 346–377; these read MAHP…RPAD and LPTPRPPFHEELPRITSSDTKDPNREHDTSDQ. A compositionally biased stretch (basic residues) spans 10–54; sequence RLQRRHGARSGSSRCRHRRPVPRRRSRSRPRWRAARAHRRHHRRS. The segment covering 84-98 has biased composition (basic and acidic residues); the sequence is RRPDPRGGANTDHHA. Basic residues-rich tracts occupy residues 99–115 and 137–146; these read APRHRRAAAGTSHRRRD and TTVRRRRQPR. The Histidine kinase domain occupies 146–350; the sequence is RITHPVGTAD…ELRITLPTPR (205 aa). At His-149 the chain carries Phosphohistidine; by autocatalysis. A compositionally biased stretch (basic and acidic residues) spans 352 to 377; it reads PFHEELPRITSSDTKDPNREHDTSDQ.

Post-translationally, autophosphorylated.

The enzyme catalyses ATP + protein L-histidine = ADP + protein N-phospho-L-histidine.. Member of the two-component system HK/TcrA. Phosphorylates TcrA. In Mycobacterium tuberculosis (strain CDC 1551 / Oshkosh), this protein is Probable sensor histidine kinase HK.